The sequence spans 411 residues: Glutamate dehydrogenase 1, mitochondrial (411 aa).

The N-terminal 18 residues, 1 to 18, are a transit peptide targeting the mitochondrion; it reads MNALAATSRNFKQAAKLL. The active site involves K102.

This sequence belongs to the Glu/Leu/Phe/Val dehydrogenases family.

It localises to the mitochondrion. The catalysed reaction is L-glutamate + NAD(+) + H2O = 2-oxoglutarate + NH4(+) + NADH + H(+). The enzyme catalyses L-glutamate + NADP(+) + H2O = 2-oxoglutarate + NH4(+) + NADPH + H(+). The chain is Glutamate dehydrogenase 1, mitochondrial (GDH1) from Oryza sativa subsp. indica (Rice).